Consider the following 74-residue polypeptide: Ubiquitin-like protein FUBI (74 aa).

The protein belongs to the ubiquitin family.

In terms of biological role, confers arsenite resistance. This is Ubiquitin-like protein FUBI (FAU) from Cricetulus griseus (Chinese hamster).